Here is a 264-residue protein sequence, read N- to C-terminus: Anamorsin homolog 2 (264 aa).

Residues 1 to 142 form an N-terminal SAM-like domain region; that stretch reads MAATAAALAV…KVSWSMGSSF (142 aa). The tract at residues 143–174 is linker; the sequence is PLKKATKGLPKIQIDDDSELIDEDSLLTEDDL. [2Fe-2S] cluster contacts are provided by cysteine 185, cysteine 194, cysteine 197, and cysteine 199. The tract at residues 185–199 is fe-S binding site A; it reads CEVGATRKACKNCTC. Residues cysteine 225, cysteine 228, cysteine 236, and cysteine 239 each contribute to the [4Fe-4S] cluster site. 2 consecutive short sequence motifs (cx2C motif) follow at residues 225–228 and 236–239; these read CGNC and CGTC. Positions 225-239 are fe-S binding site B; that stretch reads CGNCGLGDAFRCGTC.

This sequence belongs to the anamorsin family. In terms of assembly, monomer. Requires [2Fe-2S] cluster as cofactor. [4Fe-4S] cluster is required as a cofactor.

Its subcellular location is the cytoplasm. It is found in the mitochondrion intermembrane space. Its function is as follows. Component of the cytosolic iron-sulfur (Fe-S) protein assembly (CIA) machinery. Required for the maturation of extramitochondrial Fe-S proteins. Part of an electron transfer chain functioning in an early step of cytosolic Fe-S biogenesis, facilitating the de novo assembly of a [4Fe-4S] cluster on the cytosolic Fe-S scaffold complex. Electrons are transferred from NADPH via a FAD- and FMN-containing diflavin oxidoreductase. Together with the diflavin oxidoreductase, also required for the assembly of the diferric tyrosyl radical cofactor of ribonucleotide reductase (RNR), probably by providing electrons for reduction during radical cofactor maturation in the catalytic small subunit. This Oryza sativa subsp. indica (Rice) protein is Anamorsin homolog 2.